Consider the following 322-residue polypeptide: Sideroflexin-2 (322 aa).

M1 bears the N-acetylmethionine mark. The next 5 helical transmembrane spans lie at 100 to 122 (MIIT…WQWV), 142 to 164 (SVRQ…AVGM), 174 to 192 (LVGR…CVNI), 228 to 250 (VVIS…MERL), and 265 to 287 (PLQV…GLFP).

This sequence belongs to the sideroflexin family. In terms of tissue distribution, widely expressed, highest levels in kidney, liver, and pancreas.

It localises to the mitochondrion inner membrane. The protein localises to the mitochondrion outer membrane. The enzyme catalyses L-serine(in) = L-serine(out). In terms of biological role, mitochondrial amino-acid transporter that mediates transport of serine into mitochondria. Involved in mitochondrial iron homeostasis by regulating heme biosynthesis. The chain is Sideroflexin-2 from Homo sapiens (Human).